The primary structure comprises 196 residues: Probable malonic semialdehyde reductase RutE (196 aa).

It belongs to the nitroreductase family. HadB/RutE subfamily. FMN serves as cofactor.

The catalysed reaction is 3-hydroxypropanoate + NADP(+) = 3-oxopropanoate + NADPH + H(+). Its function is as follows. May reduce toxic product malonic semialdehyde to 3-hydroxypropionic acid, which is excreted. The polypeptide is Probable malonic semialdehyde reductase RutE (Escherichia coli (strain SMS-3-5 / SECEC)).